Reading from the N-terminus, the 52-residue chain is Metchnikowin (52 aa).

A signal peptide spans 1–24 (MQLNLGAIFLALLGVMATATSVLA). A propeptide spanning residues 25–26 (EP) is cleaved from the precursor. A disordered region spans residues 28–52 (RHQGPIFDTRPSPFNPNQPRPGPIY). Positions 40 to 52 (PFNPNQPRPGPIY) are enriched in pro residues.

As to expression, hemolymph (at protein level). Highest expression in fat body.

It is found in the secreted. Potent antifungal and antibacterial activity against Gram-positive bacteria. In Drosophila melanogaster (Fruit fly), this protein is Metchnikowin (Mtk).